Consider the following 492-residue polypeptide: Catalase-2 (492 aa).

Catalysis depends on residues His-65 and Asn-138. A heme-binding site is contributed by Tyr-348.

Belongs to the catalase family. In terms of assembly, homotetramer and heterotetramer. At least six or seven isozymes are produced from a mixture of 3 gene products. Interacts with NCA1. Interacts with LSD1. Heme serves as cofactor.

Its subcellular location is the cytoplasm. The protein resides in the cytosol. It is found in the peroxisome matrix. The catalysed reaction is 2 H2O2 = O2 + 2 H2O. Catalyzes the degradation of hydrogen peroxide (H(2)O(2)) generated by peroxisomal oxidases to water and oxygen, thereby protecting cells from the toxic effects of hydrogen peroxide. This chain is Catalase-2 (CAT2), found in Arabidopsis thaliana (Mouse-ear cress).